The primary structure comprises 693 residues: MSIPFGLDLGNNSSVLAVARNRGIDIIVNEVSNRSTPSLVGFGQKNRFLGESGKNKQTSNIKNTVDNLKRIVGLDYDHPDFEQESKYFSSKLVKLDDGKVGAQVRFAGKQQTFSATQLAAMYINKVKTTAVQETKGNITDVAIAVPAWYTEEQRYSIGDAAKIAGLNPVRIVNDVTAAAVSYGVFKTDLPEGEEKPRVVAFVDIGHSTYTCTIAAFKKGELKVLATAYDKHFGGRDFDRAITEHFADEFKTKYKIDIRENPKAYSRILAAAEKLKKVLSANTAAPFSVESVMNDVDVSSQLSREELEELVSPLLSRVTEPITKALAQANLTPEEVDYVEIVGGTTRIPSLKNAISEAFGKQLSTTLNQDEAIAKGAAFICAIHSPTLRVRPFKFEDIHPYSVSYSWDKQEEDEDHLEVFPAGSSYPSTKLITLQRTGDFSMQAKYTNKEELPEGTSAEIAKWDITGVQVSEGETSVPVKLKLRCDPSGLHIIEDAYTVEDIKVQELVPLPADAPEDAEPEYREVTKTVKKDTLTIIAHTFALEEKALNALIEKENELSAQDKLVAETEDRKNALEEYIYTLRGKLDEEYSDFASDDEKTRLKEMLAKAEDWLYDEGYDSIKAKYIAKYEELASLGNIIRGRYLAKEEEKRQALRSKQEASKMAELAEKLAAQRKAESEKKESKADAEGDVELD.

Residues 665 to 693 (LAEKLAAQRKAESEKKESKADAEGDVELD) form a disordered region. A compositionally biased stretch (basic and acidic residues) spans 673–686 (RKAESEKKESKADA).

The protein belongs to the heat shock protein 70 family.

Its subcellular location is the cytoplasm. The sequence is that of Heat shock protein homolog SSE1 (SSE1) from Lachancea kluyveri (strain ATCC 58438 / CBS 3082 / BCRC 21498 / NBRC 1685 / JCM 7257 / NCYC 543 / NRRL Y-12651) (Yeast).